Reading from the N-terminus, the 218-residue chain is 3,4-dihydroxy-2-butanone 4-phosphate synthase (218 aa).

Residues 38 to 39 (RE), aspartate 43, 151 to 155 (RRGHT), and glutamate 175 each bind D-ribulose 5-phosphate. Residue glutamate 39 coordinates Mg(2+). Residues 125–151 (PHAKPEDLARPGHVFPLRARPGGVMTR) form a disordered region. Histidine 154 serves as a coordination point for Mg(2+).

Belongs to the DHBP synthase family. As to quaternary structure, homodimer. Mg(2+) serves as cofactor. Requires Mn(2+) as cofactor.

It catalyses the reaction D-ribulose 5-phosphate = (2S)-2-hydroxy-3-oxobutyl phosphate + formate + H(+). It participates in cofactor biosynthesis; riboflavin biosynthesis; 2-hydroxy-3-oxobutyl phosphate from D-ribulose 5-phosphate: step 1/1. Its function is as follows. Catalyzes the conversion of D-ribulose 5-phosphate to formate and 3,4-dihydroxy-2-butanone 4-phosphate. The protein is 3,4-dihydroxy-2-butanone 4-phosphate synthase of Vibrio parahaemolyticus serotype O3:K6 (strain RIMD 2210633).